A 625-amino-acid chain; its full sequence is Chaperone protein HtpG (625 aa).

The a; substrate-binding stretch occupies residues 1-341; the sequence is MERKEFKAES…SEDLSLNISR (341 aa). Residues 342–551 form a b region; that stretch reads EMLQHDRQLK…EGEVSIEMEK (210 aa). Positions 552-625 are c; it reads VLRAMPDNQN…FSNDICKVMA (74 aa).

This sequence belongs to the heat shock protein 90 family. As to quaternary structure, homodimer.

It localises to the cytoplasm. Molecular chaperone. Has ATPase activity. In Halalkalibacterium halodurans (strain ATCC BAA-125 / DSM 18197 / FERM 7344 / JCM 9153 / C-125) (Bacillus halodurans), this protein is Chaperone protein HtpG.